A 519-amino-acid polypeptide reads, in one-letter code: bZIP transcription factor 30 (519 aa).

5 disordered regions span residues 1 to 30 (MGGG…IPKH), 45 to 83 (FRHP…QPSS), 108 to 202 (TGAG…RKPE), 222 to 295 (VLNS…TGRH), and 315 to 339 (SSLK…NSSA). Pro residues predominate over residues 51–61 (GAPPPPIPPIS). Positions 149–173 (SDVTFGFSSMMSQNQKSPPLSSLER) are enriched in polar residues. A compositionally biased stretch (basic and acidic residues) spans 187–202 (VKKEPREGFYKGRKPE). Composition is skewed to low complexity over residues 244 to 268 (SRGS…SASG) and 317 to 329 (LKLP…KVSP). Residues 330–339 (TNSGEGNSSA) are compositionally biased toward polar residues. The basic motif stretch occupies residues 372–393 (KRVKRILANRVSAARSKERKTR). Positions 386–460 (RSKERKTRYM…SEKLNEEVQR (75 aa)) form a coiled coil. Residues 398-433 (LEHKVQTLQTEATTLSAQLTHLQRDSMGLTNQNSEL) form a leucine-zipper region. The segment at 465 to 519 (IGEPNRRQSGSSSSESKMSLNPEMFQQLSISQLQHQQMQHSNQCSTMKAKHTSND) is disordered. 2 stretches are compositionally biased toward low complexity: residues 473-483 (SGSSSSESKMS) and 490-509 (QQLS…NQCS).

In terms of assembly, interacts with WUS, HEC1, KNAT1, KNAT2, HAT1, BEL1, and NGA1. In terms of tissue distribution, expressed in inflorescence meristem, floral organ primordia, gynoecia, ovules and carpel margin meristem.

The protein resides in the nucleus. Its function is as follows. Transcription factor that acts as a repressor of reproductive development, meristem size and plant growth. Acts as a transcriptional repressor in inflorescence tissues. Interacts with well known regulators of meristem and gynoecium development such as WUS, HEC1, KNAT1, KNAT2, HAT1, BEL1 and NGA1. Acts as a positive regulator of JAG and OFP1 expression in developing gynoecia. The protein is bZIP transcription factor 30 of Arabidopsis thaliana (Mouse-ear cress).